The primary structure comprises 1123 residues: Rabphilin-1 (1123 aa).

A compositionally biased stretch (basic residues) spans 1–17 (MTKSTKLRHCKQKKKKP). 2 disordered regions span residues 1-56 (MTKS…GSRS) and 88-140 (SAHN…PSTH). Positions 36–46 (DAATTTSTTDA) are enriched in low complexity. One can recognise a RabBD domain in the interval 215–341 (KAQTGSITAA…KKSGAWFYKE (127 aa)). An FYVE-type zinc finger spans residues 263-328 (GNGVTHCLLC…LCKICSEARE (66 aa)). Zn(2+) is bound by residues cysteine 269, cysteine 272, cysteine 288, cysteine 291, cysteine 296, cysteine 300, cysteine 320, and cysteine 323. 4 stretches are compositionally biased toward polar residues: residues 365-375 (PNASSAATPLS), 387-400 (TMPSTSSCQMTTPK), 410-428 (PGLQMNGGPTSPLPNGTRR), and 487-497 (ASSSDGESFVQ). 3 disordered regions span residues 365–710 (PNAS…VGSA), 737–779 (TSRA…LRTS), and 796–818 (HIVSSEPTSSTTSNQNHTSVPIP). The segment covering 531–541 (SRREANMERFS) has biased composition (basic and acidic residues). The span at 563 to 574 (ESRPSTRSTSPR) shows a compositional bias: low complexity. Composition is skewed to polar residues over residues 605 to 632 (VVQSDHSNPQQSGLTCSSSSLTPLQQQA) and 649 to 666 (PDRTTSRVAQSASGTSLV). Residues 742-753 (SPLAASSSFLSS) are compositionally biased toward low complexity. Residues 756-768 (DDTKQKNRRRDGV) show a composition bias toward basic and acidic residues. Over residues 803–818 (TSSTTSNQNHTSVPIP) the composition is skewed to low complexity. C2 domains follow at residues 844 to 967 (SLGS…NLYL) and 984 to 1103 (DRGK…RQWI). Positions 875, 881, 936, 938, 943, 1015, 1021, 1075, 1077, and 1083 each coordinate Ca(2+).

The cofactor is Ca(2+).

Its subcellular location is the synapse. Its function is as follows. Rab-3 effector. The chain is Rabphilin-1 (rbf-1) from Caenorhabditis elegans.